We begin with the raw amino-acid sequence, 304 residues long: E3 ubiquitin-protein ligase CCNB1IP1 homolog (304 aa).

The segment at 3–42 (CNACWRDLEGRAISTTCGHLLCTEDASKILSNDGACPICD) adopts an RING-type; degenerate zinc-finger fold. Residues 124–184 (TAYQKMGKRC…YESVKRTAIQ (61 aa)) are a coiled coil. The disordered stretch occupies residues 218 to 279 (SFFSPATPGP…GGGGTANPQS (62 aa)). Over residues 235-250 (RQNSSNSGPFDISTDS) the composition is skewed to polar residues.

Expressed mostly in flower buds and roots.

It is found in the nucleus. The protein resides in the chromosome. It catalyses the reaction S-ubiquitinyl-[E2 ubiquitin-conjugating enzyme]-L-cysteine + [acceptor protein]-L-lysine = [E2 ubiquitin-conjugating enzyme]-L-cysteine + N(6)-ubiquitinyl-[acceptor protein]-L-lysine.. It functions in the pathway protein modification; protein ubiquitination. Functionally, ubiquitin E3 ligase required for class I crossover (CO) formation during meiosis. In Arabidopsis thaliana (Mouse-ear cress), this protein is E3 ubiquitin-protein ligase CCNB1IP1 homolog (HEI10).